The following is a 329-amino-acid chain: GMP reductase (329 aa).

The active-site Thioimidate intermediate is Cys178. Ile207–Cys230 is a binding site for NADP(+).

Belongs to the IMPDH/GMPR family. GuaC type 2 subfamily.

It carries out the reaction IMP + NH4(+) + NADP(+) = GMP + NADPH + 2 H(+). Functionally, catalyzes the irreversible NADPH-dependent deamination of GMP to IMP. It functions in the conversion of nucleobase, nucleoside and nucleotide derivatives of G to A nucleotides, and in maintaining the intracellular balance of A and G nucleotides. The polypeptide is GMP reductase (Lacticaseibacillus paracasei (strain ATCC 334 / BCRC 17002 / CCUG 31169 / CIP 107868 / KCTC 3260 / NRRL B-441) (Lactobacillus paracasei)).